We begin with the raw amino-acid sequence, 75 residues long: Large ribosomal subunit protein bL31 (75 aa).

This sequence belongs to the bacterial ribosomal protein bL31 family. Type A subfamily. In terms of assembly, part of the 50S ribosomal subunit.

Binds the 23S rRNA. This is Large ribosomal subunit protein bL31 from Bradyrhizobium sp. (strain BTAi1 / ATCC BAA-1182).